The chain runs to 40 residues: Dolichyl-diphosphooligosaccharide--protein glycosyltransferase subunit 4 (40 aa).

At 1–4 the chain is on the lumenal side; that stretch reads MITD. A helical membrane pass occupies residues 5-25; it reads VQLAIFSNVLGVFLFLLVVAY. At 26 to 40 the chain is on the cytoplasmic side; sequence HYINANTGKPSAKAK.

Belongs to the OST4 family. As to quaternary structure, component of the oligosaccharyltransferase (OST) complex.

It localises to the endoplasmic reticulum membrane. Subunit of the oligosaccharyl transferase (OST) complex that catalyzes the initial transfer of a defined glycan (Glc(3)Man(9)GlcNAc(2) in eukaryotes) from the lipid carrier dolichol-pyrophosphate to an asparagine residue within an Asn-X-Ser/Thr consensus motif in nascent polypeptide chains, the first step in protein N-glycosylation. N-glycosylation occurs cotranslationally and the complex associates with the Sec61 complex at the channel-forming translocon complex that mediates protein translocation across the endoplasmic reticulum (ER). All subunits are required for a maximal enzyme activity. This chain is Dolichyl-diphosphooligosaccharide--protein glycosyltransferase subunit 4, found in Drosophila erecta (Fruit fly).